The following is a 1165-amino-acid chain: Serine/threonine-protein kinase/endoribonuclease ireA (1165 aa).

Positions 1–27 are cleaved as a signal peptide; sequence MRWRLPGARTTLPASVALLLLPILVAP. Over 28-504 the chain is Lumenal; that stretch reads QQLQEHDDLP…STIIRKGWDN (477 aa). N-linked (GlcNAc...) asparagine glycosylation occurs at Asn-152. Residues 505 to 525 form a helical membrane-spanning segment; it reads AVDIFVTILLLFFGAFIYFNS. Topologically, residues 526–1165 are cytoplasmic; that stretch reads HNIQELAKQK…RFKRYFTPVE (640 aa). Residues 547 to 668 are disordered; it reads QPPLSTPSTP…SEGESKDQAD (122 aa). Composition is skewed to basic and acidic residues over residues 591–600 and 611–620; these read ATPKPKRDRS and KIREPSRGPD. A compositionally biased stretch (basic residues) spans 637-655; that stretch reads PKKKARRGRRGGKNHRRGK. The segment covering 656 to 668 has biased composition (basic and acidic residues); it reads KPDSEGESKDQAD. The Protein kinase domain occupies 711–1026; the sequence is VFSDVVLGHG…ASAVLMHPFF (316 aa). ATP contacts are provided by residues 717 to 725 and Lys-739; that span reads LGHGSHGTV. Asp-832 serves as the catalytic Proton acceptor. Residues 899 to 919 form a disordered region; that stretch reads AIQGGESQHTESSEPAVVDPQ. A KEN domain is found at 1029–1163; that stretch reads PSDRLSFLCD…IDRFKRYFTP (135 aa).

Belongs to the protein kinase superfamily. Ser/Thr protein kinase family. In terms of assembly, homodimer; in response to the accumulation of unfolded proteins. The cofactor is Mg(2+). Post-translationally, autophosphorylated mainly on serine residues.

It localises to the membrane. The enzyme catalyses L-seryl-[protein] + ATP = O-phospho-L-seryl-[protein] + ADP + H(+). The catalysed reaction is L-threonyl-[protein] + ATP = O-phospho-L-threonyl-[protein] + ADP + H(+). 8-formyl-7-hydroxy-4-methylcoumarin inhibits the endonuclease activity and prebvent the splicing if the hacA mRNA. The kinase domain is activated by trans-autophosphorylation. Kinase activity is required for activation of the endoribonuclease domain. In terms of biological role, senses unfolded proteins in the lumen of the endoplasmic reticulum (ER) via its N-terminal domain which leads to enzyme auto-activation. The active endoribonuclease domain responds by cleaving an intron from the downstream cytoplasmic mRNA hacA, allowing for the translation of a transcription factor that coordinates a series of adaptive responses that are collectively known as the unfolded protein response (UPR). In the absence of ER stress, ireA controls dual signaling circuits that are both hacA-dependent and hacA-independent and which contribute to the expression of traits that are essential for virulence. The sequence is that of Serine/threonine-protein kinase/endoribonuclease ireA from Aspergillus fumigatus (strain ATCC MYA-4609 / CBS 101355 / FGSC A1100 / Af293) (Neosartorya fumigata).